The sequence spans 440 residues: 23S rRNA (uracil(1939)-C(5))-methyltransferase RlmD (440 aa).

Positions 1–21 (MRRRTSPRRTTTSKPQPIGPI) are disordered. The TRAM domain maps to 15–73 (PQPIGPIQTFEVDGLTHEAKGVARLQGKVTFIEGALPGETVEAQVNKAGRRFDEAVLVN). [4Fe-4S] cluster-binding residues include Cys-86, Cys-92, Cys-95, and Cys-169. Residues Gln-273, Phe-302, Asn-307, Glu-323, Asp-350, and Asp-370 each contribute to the S-adenosyl-L-methionine site. The active-site Nucleophile is Cys-396.

Belongs to the class I-like SAM-binding methyltransferase superfamily. RNA M5U methyltransferase family. RlmD subfamily.

It catalyses the reaction uridine(1939) in 23S rRNA + S-adenosyl-L-methionine = 5-methyluridine(1939) in 23S rRNA + S-adenosyl-L-homocysteine + H(+). Catalyzes the formation of 5-methyl-uridine at position 1939 (m5U1939) in 23S rRNA. The polypeptide is 23S rRNA (uracil(1939)-C(5))-methyltransferase RlmD (Marinomonas sp. (strain MWYL1)).